A 459-amino-acid chain; its full sequence is Serine--tRNA ligase (459 aa).

L-serine is bound at residue Thr254–Glu256. ATP contacts are provided by residues Arg285–Glu287 and Val301. Glu308 provides a ligand contact to L-serine. Glu372–Ser375 serves as a coordination point for ATP. Thr408 serves as a coordination point for L-serine.

This sequence belongs to the class-II aminoacyl-tRNA synthetase family. Type-1 seryl-tRNA synthetase subfamily. As to quaternary structure, homodimer. The tRNA molecule binds across the dimer.

It is found in the cytoplasm. The catalysed reaction is tRNA(Ser) + L-serine + ATP = L-seryl-tRNA(Ser) + AMP + diphosphate + H(+). It catalyses the reaction tRNA(Sec) + L-serine + ATP = L-seryl-tRNA(Sec) + AMP + diphosphate + H(+). It functions in the pathway aminoacyl-tRNA biosynthesis; selenocysteinyl-tRNA(Sec) biosynthesis; L-seryl-tRNA(Sec) from L-serine and tRNA(Sec): step 1/1. Its function is as follows. Catalyzes the attachment of serine to tRNA(Ser). Is also able to aminoacylate tRNA(Sec) with serine, to form the misacylated tRNA L-seryl-tRNA(Sec), which will be further converted into selenocysteinyl-tRNA(Sec). This Staphylothermus marinus (strain ATCC 43588 / DSM 3639 / JCM 9404 / F1) protein is Serine--tRNA ligase.